A 426-amino-acid chain; its full sequence is Serine--tRNA ligase (426 aa).

Thr-230–Glu-232 is an L-serine binding site. Arg-261–Glu-263 contributes to the ATP binding site. Glu-284 contacts L-serine. Glu-348–Ser-351 is an ATP binding site. An L-serine-binding site is contributed by Ser-385.

This sequence belongs to the class-II aminoacyl-tRNA synthetase family. Type-1 seryl-tRNA synthetase subfamily. As to quaternary structure, homodimer. The tRNA molecule binds across the dimer.

It is found in the cytoplasm. It catalyses the reaction tRNA(Ser) + L-serine + ATP = L-seryl-tRNA(Ser) + AMP + diphosphate + H(+). The enzyme catalyses tRNA(Sec) + L-serine + ATP = L-seryl-tRNA(Sec) + AMP + diphosphate + H(+). The protein operates within aminoacyl-tRNA biosynthesis; selenocysteinyl-tRNA(Sec) biosynthesis; L-seryl-tRNA(Sec) from L-serine and tRNA(Sec): step 1/1. Functionally, catalyzes the attachment of serine to tRNA(Ser). Is also able to aminoacylate tRNA(Sec) with serine, to form the misacylated tRNA L-seryl-tRNA(Sec), which will be further converted into selenocysteinyl-tRNA(Sec). The protein is Serine--tRNA ligase of Wolbachia pipientis subsp. Culex pipiens (strain wPip).